The primary structure comprises 115 residues: MAAESTLRGKDSTCSTIKLQFLLILSIILKRSSFVSQFSKSSFIPFNAEFIPLSEYTRTELQSAYCRREPLYKERRVQHDFRFPAPSIYQDPIYIFDQFRKPFNIFFNEAEQLSV.

This is an uncharacterized protein from Human herpesvirus 6A (strain Uganda-1102) (HHV-6 variant A).